The primary structure comprises 231 residues: Sugar fermentation stimulation protein homolog (231 aa).

Belongs to the SfsA family.

This Syntrophotalea carbinolica (strain DSM 2380 / NBRC 103641 / GraBd1) (Pelobacter carbinolicus) protein is Sugar fermentation stimulation protein homolog.